We begin with the raw amino-acid sequence, 608 residues long: Granule-bound starch synthase 1, chloroplastic/amyloplastic (608 aa).

A chloroplast-targeting transit peptide spans 1-78 (MATVIAAHFV…NGRPAAKIIC (78 aa)). Residue Lys96 participates in ADP-alpha-D-glucose binding. A disordered region spans residues 587–608 (GSEPGTEGEEIAPLAKENVPTP).

Belongs to the glycosyltransferase 1 family. Bacterial/plant glycogen synthase subfamily. As to expression, synthesized in a number of different organs, but most abundantly in tubers.

The protein resides in the plastid. It localises to the chloroplast. It is found in the amyloplast. The catalysed reaction is an NDP-alpha-D-glucose + [(1-&gt;4)-alpha-D-glucosyl](n) = [(1-&gt;4)-alpha-D-glucosyl](n+1) + a ribonucleoside 5'-diphosphate + H(+). It functions in the pathway glycan biosynthesis; starch biosynthesis. Responsible for the synthesis of amylose in reserve starch. In Manihot esculenta (Cassava), this protein is Granule-bound starch synthase 1, chloroplastic/amyloplastic (WAXY).